We begin with the raw amino-acid sequence, 126 residues long: UPF0102 protein P9303_16141 (126 aa).

Belongs to the UPF0102 family.

This chain is UPF0102 protein P9303_16141, found in Prochlorococcus marinus (strain MIT 9303).